The chain runs to 344 residues: Beta-1,4-galactosyltransferase 4 (344 aa).

Residues 1-12 (MGCNPPYHLSYR) are Cytoplasmic-facing. The helical; Signal-anchor for type II membrane protein transmembrane segment at 13–38 (LRLLLLFTLCLTVVGWATSNYFVGAI) threads the bilayer. Topologically, residues 39–344 (QVIPKAKDFM…NITVDFWTAA (306 aa)) are lumenal. The cysteines at positions 77 and 118 are disulfide-linked. Residues 129–133 (PHRNR), 168–170 (FNR), and 195–196 (VD) each bind UDP-alpha-D-galactose. The cysteines at positions 189 and 208 are disulfide-linked. Asp-196 is a Mn(2+) binding site. A glycan (N-linked (GlcNAc...) asparagine) is linked at Asn-220. UDP-alpha-D-galactose contacts are provided by Tyr-224 and Trp-256. Position 258-261 (258-261 (GEDD)) interacts with N-acetyl-D-glucosamine. His-289 contacts Mn(2+). 289 to 291 (HTR) contributes to the UDP-alpha-D-galactose binding site. An N-acetyl-D-glucosamine-binding site is contributed by Arg-301. An N-linked (GlcNAc...) asparagine glycan is attached at Asn-335.

This sequence belongs to the glycosyltransferase 7 family. Interacts with SLC35A2/UGT1. The cofactor is Mn(2+).

It is found in the golgi apparatus membrane. The protein localises to the secreted. The enzyme catalyses N-acetyl-D-glucosamine + UDP-alpha-D-galactose = beta-D-galactosyl-(1-&gt;4)-N-acetyl-D-glucosamine + UDP + H(+). It carries out the reaction a beta-D-GlcNAc-(1-&gt;3)-beta-D-Gal-(1-&gt;4)-beta-D-Glc-(1&lt;-&gt;1)-Cer(d18:1(4E)) + UDP-alpha-D-galactose = a neolactoside nLc4Cer(d18:1(4E)) + UDP + H(+). The catalysed reaction is 3-O-{beta-D-galactosyl-(1-&gt;3)-[6-O-sulfo-N-acetyl-beta-D-glucosaminyl-(1-&gt;6)]-N-acetyl-alpha-D-galactosaminyl}-L-seryl-[protein] + UDP-alpha-D-galactose = 3-O-{beta-D-galactosyl-(1-&gt;3)-[beta-D-galactosyl-(1-&gt;4)-6-O-sulfo-N-acetyl-beta-D-glucosaminyl-(1-&gt;6)]-N-acetyl-alpha-D-galactosaminyl}-L-seryl-[protein] + UDP + H(+). It catalyses the reaction 3-O-{beta-D-galactosyl-(1-&gt;3)-[6-O-sulfo-N-acetyl-beta-D-glucosaminyl-(1-&gt;6)]-N-acetyl-alpha-D-galactosaminyl}-L-threonyl-[protein] + UDP-alpha-D-galactose = 3-O-{beta-D-galactosyl-(1-&gt;3)-[beta-D-galactosyl-(1-&gt;4)-6-O-sulfo-N-acetyl-beta-D-glucosaminyl-(1-&gt;6)]-N-acetyl-alpha-D-galactosaminyl}-L-threonyl-[protein] + UDP + H(+). It participates in protein modification; protein glycosylation. The protein operates within glycolipid biosynthesis. In terms of biological role, galactose (Gal) transferase involved in the synthesis of terminal N-acetyllactosamine (LacNac) unit present on glycan chains of glycoproteins and glycosphingolipids. Catalyzes the transfer of Gal residue via a beta1-&gt;4 linkage from UDP-Gal to the non-reducing terminal N-acetyl glucosamine 6-O-sulfate (6-O-sulfoGlcNAc) in the linearly growing chain of both N- and O-linked keratan sulfate proteoglycans. Cooperates with B3GNT7 N-acetyl glucosamine transferase and CHST6 and CHST1 sulfotransferases to construct and elongate mono- and disulfated disaccharide units [-&gt;3Galbeta1-&gt;4(6-sulfoGlcNAcbeta)1-&gt;] and [-&gt;3(6-sulfoGalbeta)1-&gt;4(6-sulfoGlcNAcbeta)1-&gt;] within keratan sulfate polymer. Transfers Gal residue via a beta1-&gt;4 linkage to terminal 6-O-sulfoGlcNAc within the LacNac unit of core 2 O-glycans forming 6-sulfo-sialyl-Lewis X (sLex). May contribute to the generation of sLex epitope on mucin-type glycoproteins that serve as ligands for SELL/L-selectin, a major regulator of leukocyte migration. In the biosynthesis pathway of neolacto-series glycosphingolipids, transfers Gal residue via a beta1-&gt;4 linkage to terminal GlcNAc of a lactotriaosylceramide (Lc3Cer) acceptor to form a neolactotetraosylceramide. In Mus musculus (Mouse), this protein is Beta-1,4-galactosyltransferase 4.